The primary structure comprises 509 residues: Methionine--tRNA ligase (509 aa).

Positions 12–22 match the 'HIGH' region motif; the sequence is YYVNDVPHIGH. The short motif at 295–299 is the 'KMSKS' region element; it reads KISKS. Lys-298 lines the ATP pocket.

It belongs to the class-I aminoacyl-tRNA synthetase family. MetG type 2B subfamily. Monomer.

Its subcellular location is the cytoplasm. The enzyme catalyses tRNA(Met) + L-methionine + ATP = L-methionyl-tRNA(Met) + AMP + diphosphate. Functionally, is required not only for elongation of protein synthesis but also for the initiation of all mRNA translation through initiator tRNA(fMet) aminoacylation. The chain is Methionine--tRNA ligase from Rickettsia bellii (strain RML369-C).